Consider the following 69-residue polypeptide: DNA gyrase inhibitor YacG (69 aa).

Zn(2+) contacts are provided by cysteine 7, cysteine 10, cysteine 26, and cysteine 30.

This sequence belongs to the DNA gyrase inhibitor YacG family. Interacts with GyrB. The cofactor is Zn(2+).

Inhibits all the catalytic activities of DNA gyrase by preventing its interaction with DNA. Acts by binding directly to the C-terminal domain of GyrB, which probably disrupts DNA binding by the gyrase. This chain is DNA gyrase inhibitor YacG, found in Shewanella baltica (strain OS155 / ATCC BAA-1091).